The primary structure comprises 526 residues: Chaperonin GroEL 2 (526 aa).

ATP contacts are provided by K50, G413, and D494.

Belongs to the chaperonin (HSP60) family. As to quaternary structure, forms a cylinder of 14 subunits composed of two heptameric rings stacked back-to-back. Interacts with the co-chaperonin GroES.

It localises to the cytoplasm. The enzyme catalyses ATP + H2O + a folded polypeptide = ADP + phosphate + an unfolded polypeptide.. In terms of biological role, together with its co-chaperonin GroES, plays an essential role in assisting protein folding. The GroEL-GroES system forms a nano-cage that allows encapsulation of the non-native substrate proteins and provides a physical environment optimized to promote and accelerate protein folding. This chain is Chaperonin GroEL 2, found in Chlamydia pneumoniae (Chlamydophila pneumoniae).